We begin with the raw amino-acid sequence, 286 residues long: Bifunctional protein FolD (286 aa).

Residues 165-167, Ser-190, and Val-231 each bind NADP(+); that span reads GRS.

It belongs to the tetrahydrofolate dehydrogenase/cyclohydrolase family. As to quaternary structure, homodimer.

It catalyses the reaction (6R)-5,10-methylene-5,6,7,8-tetrahydrofolate + NADP(+) = (6R)-5,10-methenyltetrahydrofolate + NADPH. The enzyme catalyses (6R)-5,10-methenyltetrahydrofolate + H2O = (6R)-10-formyltetrahydrofolate + H(+). The protein operates within one-carbon metabolism; tetrahydrofolate interconversion. Functionally, catalyzes the oxidation of 5,10-methylenetetrahydrofolate to 5,10-methenyltetrahydrofolate and then the hydrolysis of 5,10-methenyltetrahydrofolate to 10-formyltetrahydrofolate. The sequence is that of Bifunctional protein FolD from Bacillus cereus (strain B4264).